The primary structure comprises 453 residues: Bifunctional protein GlmU (453 aa).

A pyrophosphorylase region spans residues 1-226; it reads MLDILILAAG…IQEVEGINNR (226 aa). Residues 7–10, lysine 21, glutamine 72, 77–78, 99–101, glycine 136, glutamate 151, asparagine 166, and asparagine 224 contribute to the UDP-N-acetyl-alpha-D-glucosamine site; these read LAAG, GT, and YGD. Aspartate 101 lines the Mg(2+) pocket. Asparagine 224 provides a ligand contact to Mg(2+). The linker stretch occupies residues 227–247; the sequence is QQQATLERYYQQQQARALMDA. The N-acetyltransferase stretch occupies residues 248-453; the sequence is GVTLLDPARF…QGWERPTRKS (206 aa). Residues arginine 330 and lysine 348 each contribute to the UDP-N-acetyl-alpha-D-glucosamine site. Residue histidine 360 is the Proton acceptor of the active site. Tyrosine 363 and asparagine 374 together coordinate UDP-N-acetyl-alpha-D-glucosamine. Acetyl-CoA is bound by residues alanine 377, 383–384, serine 402, alanine 420, and arginine 437; that span reads NY.

The protein in the N-terminal section; belongs to the N-acetylglucosamine-1-phosphate uridyltransferase family. In the C-terminal section; belongs to the transferase hexapeptide repeat family. In terms of assembly, homotrimer. It depends on Mg(2+) as a cofactor.

It localises to the cytoplasm. The enzyme catalyses alpha-D-glucosamine 1-phosphate + acetyl-CoA = N-acetyl-alpha-D-glucosamine 1-phosphate + CoA + H(+). It carries out the reaction N-acetyl-alpha-D-glucosamine 1-phosphate + UTP + H(+) = UDP-N-acetyl-alpha-D-glucosamine + diphosphate. It functions in the pathway nucleotide-sugar biosynthesis; UDP-N-acetyl-alpha-D-glucosamine biosynthesis; N-acetyl-alpha-D-glucosamine 1-phosphate from alpha-D-glucosamine 6-phosphate (route II): step 2/2. The protein operates within nucleotide-sugar biosynthesis; UDP-N-acetyl-alpha-D-glucosamine biosynthesis; UDP-N-acetyl-alpha-D-glucosamine from N-acetyl-alpha-D-glucosamine 1-phosphate: step 1/1. Its pathway is bacterial outer membrane biogenesis; LPS lipid A biosynthesis. Catalyzes the last two sequential reactions in the de novo biosynthetic pathway for UDP-N-acetylglucosamine (UDP-GlcNAc). The C-terminal domain catalyzes the transfer of acetyl group from acetyl coenzyme A to glucosamine-1-phosphate (GlcN-1-P) to produce N-acetylglucosamine-1-phosphate (GlcNAc-1-P), which is converted into UDP-GlcNAc by the transfer of uridine 5-monophosphate (from uridine 5-triphosphate), a reaction catalyzed by the N-terminal domain. The sequence is that of Bifunctional protein GlmU from Cellvibrio japonicus (strain Ueda107) (Pseudomonas fluorescens subsp. cellulosa).